Here is an 89-residue protein sequence, read N- to C-terminus: Putative acyl-CoA-binding protein (89 aa).

The ACB domain occupies 3 to 88 (VEEQFKTSAE…VKELVEKNGL (86 aa)). Residues lysine 15, 30 to 34 (YSLYK), lysine 52, lysine 56, and tyrosine 75 contribute to the an acyl-CoA site.

Belongs to the ACBP family.

Its function is as follows. Binds medium- and long-chain acyl-CoA esters with very high affinity and may function as an intracellular carrier of acyl-CoA esters. The polypeptide is Putative acyl-CoA-binding protein (Hypsibius exemplaris (Freshwater tardigrade)).